The primary structure comprises 162 residues: 2-C-methyl-D-erythritol 2,4-cyclodiphosphate synthase (162 aa).

Positions 10 and 12 each coordinate a divalent metal cation. 4-CDP-2-C-methyl-D-erythritol 2-phosphate contacts are provided by residues 10–12 (DVH) and 36–37 (HS). His-44 contributes to the a divalent metal cation binding site. Residues 58 to 60 (DIG), 63 to 67 (FPDTD), 102 to 108 (AQAPRMA), 134 to 137 (TTSE), Phe-141, and Arg-144 contribute to the 4-CDP-2-C-methyl-D-erythritol 2-phosphate site.

Belongs to the IspF family. In terms of assembly, homotrimer. A divalent metal cation is required as a cofactor.

It carries out the reaction 4-CDP-2-C-methyl-D-erythritol 2-phosphate = 2-C-methyl-D-erythritol 2,4-cyclic diphosphate + CMP. The protein operates within isoprenoid biosynthesis; isopentenyl diphosphate biosynthesis via DXP pathway; isopentenyl diphosphate from 1-deoxy-D-xylulose 5-phosphate: step 4/6. Functionally, involved in the biosynthesis of isopentenyl diphosphate (IPP) and dimethylallyl diphosphate (DMAPP), two major building blocks of isoprenoid compounds. Catalyzes the conversion of 4-diphosphocytidyl-2-C-methyl-D-erythritol 2-phosphate (CDP-ME2P) to 2-C-methyl-D-erythritol 2,4-cyclodiphosphate (ME-CPP) with a corresponding release of cytidine 5-monophosphate (CMP). The polypeptide is 2-C-methyl-D-erythritol 2,4-cyclodiphosphate synthase (Chromohalobacter salexigens (strain ATCC BAA-138 / DSM 3043 / CIP 106854 / NCIMB 13768 / 1H11)).